Reading from the N-terminus, the 877-residue chain is Alanine--tRNA ligase (877 aa).

Positions 562, 566, 664, and 668 each coordinate Zn(2+).

Belongs to the class-II aminoacyl-tRNA synthetase family. Zn(2+) serves as cofactor.

The protein localises to the cytoplasm. The catalysed reaction is tRNA(Ala) + L-alanine + ATP = L-alanyl-tRNA(Ala) + AMP + diphosphate. Catalyzes the attachment of alanine to tRNA(Ala) in a two-step reaction: alanine is first activated by ATP to form Ala-AMP and then transferred to the acceptor end of tRNA(Ala). Also edits incorrectly charged Ser-tRNA(Ala) and Gly-tRNA(Ala) via its editing domain. The chain is Alanine--tRNA ligase from Picosynechococcus sp. (strain ATCC 27264 / PCC 7002 / PR-6) (Agmenellum quadruplicatum).